The following is an 854-amino-acid chain: DNA mismatch repair protein MutS (854 aa).

Position 615–622 (615–622 (GPNMGGKS)) interacts with ATP.

The protein belongs to the DNA mismatch repair MutS family.

Its function is as follows. This protein is involved in the repair of mismatches in DNA. It is possible that it carries out the mismatch recognition step. This protein has a weak ATPase activity. This chain is DNA mismatch repair protein MutS, found in Aliivibrio fischeri (strain ATCC 700601 / ES114) (Vibrio fischeri).